The chain runs to 198 residues: Ribonuclease HII (198 aa).

The region spanning 10–198 (HLVAGVDEVG…PVKRALELAS (189 aa)) is the RNase H type-2 domain. The a divalent metal cation site is built by D16, E17, and D108.

It belongs to the RNase HII family. Mn(2+) serves as cofactor. Mg(2+) is required as a cofactor.

The protein resides in the cytoplasm. It catalyses the reaction Endonucleolytic cleavage to 5'-phosphomonoester.. Functionally, endonuclease that specifically degrades the RNA of RNA-DNA hybrids. This Salmonella arizonae (strain ATCC BAA-731 / CDC346-86 / RSK2980) protein is Ribonuclease HII.